The sequence spans 124 residues: Small ribosomal subunit protein uS12 (124 aa).

A 3-methylthioaspartic acid modification is found at aspartate 89.

The protein belongs to the universal ribosomal protein uS12 family. In terms of assembly, part of the 30S ribosomal subunit. Contacts proteins S8 and S17. May interact with IF1 in the 30S initiation complex.

With S4 and S5 plays an important role in translational accuracy. Functionally, interacts with and stabilizes bases of the 16S rRNA that are involved in tRNA selection in the A site and with the mRNA backbone. Located at the interface of the 30S and 50S subunits, it traverses the body of the 30S subunit contacting proteins on the other side and probably holding the rRNA structure together. The combined cluster of proteins S8, S12 and S17 appears to hold together the shoulder and platform of the 30S subunit. This is Small ribosomal subunit protein uS12 from Klebsiella pneumoniae (strain 342).